Consider the following 283-residue polypeptide: Methylamine utilization ferredoxin-type protein MauN (283 aa).

2 consecutive 4Fe-4S ferredoxin-type domains span residues 208–239 (LRVTAEQSGSCAGCGSCIRVCPEPHVLAPVVS) and 241–270 (KANTVTHGDCTRCGACLDQCATGALAMKLD). Residues C218, C221, C224, C228, C250, C253, C256, and C260 each coordinate [4Fe-4S] cluster.

It participates in one-carbon metabolism; methylamine degradation. Its function is as follows. Involved in electron transfer. In Methylobacillus flagellatus (strain ATCC 51484 / DSM 6875 / VKM B-1610 / KT), this protein is Methylamine utilization ferredoxin-type protein MauN (mauN).